Here is a 217-residue protein sequence, read N- to C-terminus: Proteasome subunit beta (217 aa).

Positions Met-1–Gly-14 are cleaved as a propeptide — removed in mature form; by autocatalysis. The active-site Nucleophile is Thr-15.

It belongs to the peptidase T1B family. As to quaternary structure, the 20S proteasome core is composed of 14 alpha and 14 beta subunits that assemble into four stacked heptameric rings, resulting in a barrel-shaped structure. The two inner rings, each composed of seven catalytic beta subunits, are sandwiched by two outer rings, each composed of seven alpha subunits. The catalytic chamber with the active sites is on the inside of the barrel. Has a gated structure, the ends of the cylinder being occluded by the N-termini of the alpha-subunits. Is capped at one or both ends by the proteasome regulatory ATPase, PAN.

The protein localises to the cytoplasm. It catalyses the reaction Cleavage of peptide bonds with very broad specificity.. Its activity is regulated as follows. The formation of the proteasomal ATPase PAN-20S proteasome complex, via the docking of the C-termini of PAN into the intersubunit pockets in the alpha-rings, triggers opening of the gate for substrate entry. Interconversion between the open-gate and close-gate conformations leads to a dynamic regulation of the 20S proteasome proteolysis activity. Functionally, component of the proteasome core, a large protease complex with broad specificity involved in protein degradation. This chain is Proteasome subunit beta, found in Methanococcus aeolicus (strain ATCC BAA-1280 / DSM 17508 / OCM 812 / Nankai-3).